Reading from the N-terminus, the 538-residue chain is Syncytin-1 (538 aa).

Positions 1 to 20 (MALPYHIFLFTVLLPSFTLT) are cleaved as a signal peptide. Residues 21–443 (APPPCRCMTS…NIGPWGLFSQ (423 aa)) are Extracellular-facing. N169 carries N-linked (GlcNAc...) asparagine glycosylation. A CXXC motif is present at residues 186 to 189 (CWMC). Cystine bridges form between C186–C189, C186–C405, and C397–C404. N-linked (GlcNAc...) asparagine glycosylation is found at N208, N214, N234, N242, N245, and N281. Residues 320–340 (ILPFVMAAGVLGALGTGIGGI) are fusion peptide. Residues 380 to 396 (LQNRRALDLLTAERGGT) are immunosuppression. The CX6CC motif lies at 397-405 (CLFLGEECC). An N-linked (GlcNAc...) asparagine glycan is attached at N409. A helical membrane pass occupies residues 444 to 464 (WMPWILPFLGPLAAIILLLLF). Positions 465 to 484 (GPCIFNLLVNFVSSRIEAVK) are essential for the fusiogenic function. The Cytoplasmic segment spans residues 465 to 538 (GPCIFNLLVN…LLRPNSAGSS (74 aa)). A disordered region spans residues 501-538 (PLDWPASPRSDVNDIKGTPPEEISTAQPLLRPNSAGSS).

The protein belongs to the gamma type-C retroviral envelope protein family. HERV class-I W env subfamily. As to quaternary structure, the mature envelope protein (Env) consists of a trimer of SU-TM heterodimers attached probably by a labile interchain disulfide bond. Interacts with the C-type lectin CD209/DC-SIGN. Post-translationally, specific enzymatic cleavages in vivo yield mature proteins. Envelope glycoproteins are synthesized as an inactive precursor that is heavily N-glycosylated and processed likely by furin in the Golgi to yield the mature SU and TM proteins. The cleavage site between SU and TM requires the minimal sequence [KR]-X-[KR]-R. The CXXC motif is highly conserved across a broad range of retroviral envelope proteins. It is thought to participate in the formation of a labile disulfide bond possibly with the CX6CC motif present in the transmembrane protein.

It localises to the cell membrane. It is found in the virion. Functionally, this endogenous retroviral envelope protein has retained its original fusogenic properties and participates in trophoblast fusion and the formation of a syncytium during placenta morphogenesis. May recognize and induce fusion through binding of SLC1A4 and SLC1A5. Endogenous envelope proteins may have kept, lost or modified their original function during evolution. Retroviral envelope proteins mediate receptor recognition and membrane fusion during early infection. The surface protein (SU) mediates receptor recognition, while the transmembrane protein (TM) acts as a class I viral fusion protein. The protein may have at least 3 conformational states: pre-fusion native state, pre-hairpin intermediate state, and post-fusion hairpin state. During viral and target cell membrane fusion, the coiled coil regions (heptad repeats) assume a trimer-of-hairpins structure, positioning the fusion peptide in close proximity to the C-terminal region of the ectodomain. The formation of this structure appears to drive apposition and subsequent fusion of membranes. This chain is Syncytin-1 (ERVW-1), found in Pongo pygmaeus (Bornean orangutan).